Consider the following 341-residue polypeptide: MSDWTHKIAVLGAGSWGTALAALLARHGHPTVLWGRDAAMVDTIDRTHENARYLPGIALPDSLRATTDLQAAVADATWILVVVPSHAFTETIRLIAPLRPAGAGVAWATKGFEPGSGRFLHEVARDILGPSVPLAVVTGPSFAKEVTLGLPTAITVHGDDAAFAQVVADAMHGPTFRAYTGDDMVGAELGGAMKNVLAVATGVADGMQLGLNARAGLITRGLNEMLRLAAVIGARPETLMGLAGLGDLVLTCTGDLSRNRRLGLALGRGQSLDDAIREIGQVVESVQTADEVMRQAEHHGIELPISNAVRAVLHGEITPEAGLKELLARERKPEYPQTLFT.

The NADPH site is built by Ser15, Trp16, Arg36, and Lys110. Residues Lys110, Gly139, and Ser141 each contribute to the sn-glycerol 3-phosphate site. An NADPH-binding site is contributed by Ala143. Sn-glycerol 3-phosphate contacts are provided by Lys194, Asp247, Ser257, Arg258, and Asn259. Lys194 serves as the catalytic Proton acceptor. An NADPH-binding site is contributed by Arg258. NADPH contacts are provided by Val282 and Glu284.

The protein belongs to the NAD-dependent glycerol-3-phosphate dehydrogenase family.

It localises to the cytoplasm. The catalysed reaction is sn-glycerol 3-phosphate + NAD(+) = dihydroxyacetone phosphate + NADH + H(+). It carries out the reaction sn-glycerol 3-phosphate + NADP(+) = dihydroxyacetone phosphate + NADPH + H(+). It participates in membrane lipid metabolism; glycerophospholipid metabolism. Its function is as follows. Catalyzes the reduction of the glycolytic intermediate dihydroxyacetone phosphate (DHAP) to sn-glycerol 3-phosphate (G3P), the key precursor for phospholipid synthesis. This is Glycerol-3-phosphate dehydrogenase [NAD(P)+] from Xanthomonas euvesicatoria pv. vesicatoria (strain 85-10) (Xanthomonas campestris pv. vesicatoria).